We begin with the raw amino-acid sequence, 219 residues long: Mediator of RNA polymerase II transcription subunit 21 (219 aa).

The stretch at 86–125 (SAEEQLHKIDSLQKKLVDIEDEKIHAIKKKDDLLKQVDDL) forms a coiled coil. The disordered stretch occupies residues 141–219 (SLAPENVQED…ISESISPGKI (79 aa)). Composition is skewed to basic and acidic residues over residues 166–181 (IEQKIANEKIESKIEG) and 191–204 (SDSKSADSELFMDK). Polar residues predominate over residues 210 to 219 (ISESISPGKI).

This sequence belongs to the Mediator complex subunit 21 family. Component of the Mediator complex.

The protein localises to the nucleus. Functionally, component of the Mediator complex, a coactivator involved in the regulated transcription of nearly all RNA polymerase II-dependent genes. Mediator functions as a bridge to convey information from gene-specific regulatory proteins to the basal RNA polymerase II transcription machinery. Mediator is recruited to promoters by direct interactions with regulatory proteins and serves as a scaffold for the assembly of a functional preinitiation complex with RNA polymerase II and the general transcription factors. This is Mediator of RNA polymerase II transcription subunit 21 (SRB7) from Candida glabrata (strain ATCC 2001 / BCRC 20586 / JCM 3761 / NBRC 0622 / NRRL Y-65 / CBS 138) (Yeast).